The primary structure comprises 425 residues: GTPase Obg (425 aa).

In terms of domain architecture, Obg spans 1 to 158 (MFKDYAKIHV…LWLELELKLL (158 aa)). One can recognise an OBG-type G domain in the interval 159–329 (ADVGLVGFPN…LIYRTYRLLE (171 aa)). GTP contacts are provided by residues 165–172 (GFPNAGKS), 190–194 (FTTLE), 212–215 (DIPG), 282–285 (NKTD), and 310–312 (SAL). Mg(2+)-binding residues include serine 172 and threonine 192. Residues 341-421 (VPDERETDVT…IGRFEFEYSE (81 aa)) form the OCT domain.

The protein belongs to the TRAFAC class OBG-HflX-like GTPase superfamily. OBG GTPase family. In terms of assembly, monomer. Mg(2+) serves as cofactor.

The protein localises to the cytoplasm. Its function is as follows. An essential GTPase which binds GTP, GDP and possibly (p)ppGpp with moderate affinity, with high nucleotide exchange rates and a fairly low GTP hydrolysis rate. Plays a role in control of the cell cycle, stress response, ribosome biogenesis and in those bacteria that undergo differentiation, in morphogenesis control. This chain is GTPase Obg, found in Desulforudis audaxviator (strain MP104C).